Here is a 1070-residue protein sequence, read N- to C-terminus: DNA-directed RNA polymerase subunit beta (1070 aa).

This sequence belongs to the RNA polymerase beta chain family. In plastids the minimal PEP RNA polymerase catalytic core is composed of four subunits: alpha, beta, beta', and beta''. When a (nuclear-encoded) sigma factor is associated with the core the holoenzyme is formed, which can initiate transcription.

It localises to the plastid. The catalysed reaction is RNA(n) + a ribonucleoside 5'-triphosphate = RNA(n+1) + diphosphate. DNA-dependent RNA polymerase catalyzes the transcription of DNA into RNA using the four ribonucleoside triphosphates as substrates. This Cuscuta reflexa (Southern Asian dodder) protein is DNA-directed RNA polymerase subunit beta (rpoB).